Consider the following 861-residue polypeptide: Probable linoleate 9S-lipoxygenase 3 (861 aa).

The region spanning 33–160 (FTDLASSLTG…NYKSDRIFFA (128 aa)) is the PLAT domain. Residues 163-861 (PYLPSDTPEL…GKGIPNSVSI (699 aa)) form the Lipoxygenase domain. Residues 220-247 (TLGGSAEYPYPRRGRTGRPPTRTDPKSE) are disordered. The Fe cation site is built by histidine 522, histidine 527, histidine 713, asparagine 717, and isoleucine 861.

The protein belongs to the lipoxygenase family. As to quaternary structure, monomer. Fe cation is required as a cofactor. Expressed in tubers and roots. Not detected in leaves, flowers, stems, shoot tips, or axillary buds.

The protein resides in the cytoplasm. It catalyses the reaction (9Z,12Z)-octadecadienoate + O2 = (9S)-hydroperoxy-(10E,12Z)-octadecadienoate. It participates in lipid metabolism; oxylipin biosynthesis. In terms of biological role, plant lipoxygenases may be involved in a number of diverse aspects of plant physiology including growth and development, pest resistance, and senescence or responses to wounding. Catalyzes the hydroperoxidation of lipids containing a cis,cis-1,4-pentadiene structure. The chain is Probable linoleate 9S-lipoxygenase 3 (LOX1.3) from Solanum tuberosum (Potato).